Reading from the N-terminus, the 111-residue chain is Large ribosomal subunit protein uL24 (111 aa).

It belongs to the universal ribosomal protein uL24 family. As to quaternary structure, part of the 50S ribosomal subunit.

In terms of biological role, one of two assembly initiator proteins, it binds directly to the 5'-end of the 23S rRNA, where it nucleates assembly of the 50S subunit. One of the proteins that surrounds the polypeptide exit tunnel on the outside of the subunit. In Heliobacterium modesticaldum (strain ATCC 51547 / Ice1), this protein is Large ribosomal subunit protein uL24.